A 179-amino-acid polypeptide reads, in one-letter code: HTH-type transcriptional regulator AldR (179 aa).

An HTH asnC-type domain is found at 32–93 (LDEVDRRILS…DIDPVAVGLP (62 aa)). A DNA-binding region (H-T-H motif) is located at residues 51–70 (NNALADTVGIAPSTCHGRVR).

In terms of assembly, homooctamer. Homotetramer. Tetramer of dimers. The N-terminal DNA-binding domains are swapped, forming a dimer, and four dimers are assembled into an octamer through crystal symmetry.

With respect to regulation, the DNA-binding activity of AldR is modulated by interaction of AldR with various amino acids. Alanine, tryptophan, tyrosine and aspartate completely abolish the DNA binding ability of AldR. On the other hand, glutamate and asparagine reduce AldR binding to DNA but do not completely abolish it. Binding of amino acids can lead to structural modifications and changes in oligomeric association. Activity is also inhibited by 3 small molecule inhibitors, tetrahydroquinoline carbonitrile derivative (S010-0261), levothyroxine and liothyronine, which can disrupt the AldR-DNA complex. Its function is as follows. Transcriptional regulator that might play a role under hypoxic conditions. Regulates the expression of ald, which encodes L-alanine dehydrogenase. Serves as both an activator for ald expression in the presence of L-alanine and a repressor in the absence of L-alanine. Acts by binding directly to the upstream region of the ald gene. Four AldR-binding sites (O2, O1, O4 and O3) were identified upstream of the ald gene. O2, O1 and O4 are required for the induction of ald expression by alanine, while O3 is directly involved in the repression of ald expression, by occluding the access of RNA polymerase to the ald promoter. In addition to O3, both O1 and O4 are also necessary for full repression of ald expression in the absence of alanine. This is HTH-type transcriptional regulator AldR from Mycobacterium tuberculosis (strain ATCC 25618 / H37Rv).